Consider the following 311-residue polypeptide: Methionyl-tRNA formyltransferase (311 aa).

110 to 113 (SLLP) provides a ligand contact to (6S)-5,6,7,8-tetrahydrofolate.

It belongs to the Fmt family.

The enzyme catalyses L-methionyl-tRNA(fMet) + (6R)-10-formyltetrahydrofolate = N-formyl-L-methionyl-tRNA(fMet) + (6S)-5,6,7,8-tetrahydrofolate + H(+). In terms of biological role, attaches a formyl group to the free amino group of methionyl-tRNA(fMet). The formyl group appears to play a dual role in the initiator identity of N-formylmethionyl-tRNA by promoting its recognition by IF2 and preventing the misappropriation of this tRNA by the elongation apparatus. This chain is Methionyl-tRNA formyltransferase, found in Streptococcus mutans serotype c (strain ATCC 700610 / UA159).